We begin with the raw amino-acid sequence, 326 residues long: 4-hydroxythreonine-4-phosphate dehydrogenase (326 aa).

Histidine 133 and threonine 134 together coordinate substrate. Residues histidine 163, histidine 208, and histidine 263 each contribute to the a divalent metal cation site. Substrate-binding residues include lysine 271, asparagine 280, and arginine 289.

It belongs to the PdxA family. Homodimer. The cofactor is Zn(2+). Mg(2+) is required as a cofactor. It depends on Co(2+) as a cofactor.

It is found in the cytoplasm. The enzyme catalyses 4-(phosphooxy)-L-threonine + NAD(+) = 3-amino-2-oxopropyl phosphate + CO2 + NADH. Its pathway is cofactor biosynthesis; pyridoxine 5'-phosphate biosynthesis; pyridoxine 5'-phosphate from D-erythrose 4-phosphate: step 4/5. In terms of biological role, catalyzes the NAD(P)-dependent oxidation of 4-(phosphooxy)-L-threonine (HTP) into 2-amino-3-oxo-4-(phosphooxy)butyric acid which spontaneously decarboxylates to form 3-amino-2-oxopropyl phosphate (AHAP). The polypeptide is 4-hydroxythreonine-4-phosphate dehydrogenase (Pseudoalteromonas atlantica (strain T6c / ATCC BAA-1087)).